The primary structure comprises 124 residues: Putative membrane protein insertion efficiency factor (124 aa).

A compositionally biased stretch (basic and acidic residues) spans 1–12 (MCPQPHADHAIT). Residues 1-26 (MCPQPHADHAITRGDTGAAGGRNWSG) form a disordered region.

The protein belongs to the UPF0161 family.

It localises to the cell inner membrane. In terms of biological role, could be involved in insertion of integral membrane proteins into the membrane. This is Putative membrane protein insertion efficiency factor from Rhizobium meliloti (strain 1021) (Ensifer meliloti).